We begin with the raw amino-acid sequence, 256 residues long: Thiazole synthase (256 aa).

The active-site Schiff-base intermediate with DXP is the Lys97. Residues Gly158, 184 to 185 (AG), and 206 to 207 (NT) each bind 1-deoxy-D-xylulose 5-phosphate.

Belongs to the ThiG family. Homotetramer. Forms heterodimers with either ThiH or ThiS.

It is found in the cytoplasm. The catalysed reaction is [ThiS sulfur-carrier protein]-C-terminal-Gly-aminoethanethioate + 2-iminoacetate + 1-deoxy-D-xylulose 5-phosphate = [ThiS sulfur-carrier protein]-C-terminal Gly-Gly + 2-[(2R,5Z)-2-carboxy-4-methylthiazol-5(2H)-ylidene]ethyl phosphate + 2 H2O + H(+). The protein operates within cofactor biosynthesis; thiamine diphosphate biosynthesis. Catalyzes the rearrangement of 1-deoxy-D-xylulose 5-phosphate (DXP) to produce the thiazole phosphate moiety of thiamine. Sulfur is provided by the thiocarboxylate moiety of the carrier protein ThiS. In vitro, sulfur can be provided by H(2)S. The sequence is that of Thiazole synthase from Flavobacterium psychrophilum (strain ATCC 49511 / DSM 21280 / CIP 103535 / JIP02/86).